Here is a 206-residue protein sequence, read N- to C-terminus: Small ribosomal subunit protein uS4 (206 aa).

An S4 RNA-binding domain is found at 96 to 156 (GRLDNVVYRM…EKSKKQARIK (61 aa)).

It belongs to the universal ribosomal protein uS4 family. Part of the 30S ribosomal subunit. Contacts protein S5. The interaction surface between S4 and S5 is involved in control of translational fidelity.

Functionally, one of the primary rRNA binding proteins, it binds directly to 16S rRNA where it nucleates assembly of the body of the 30S subunit. With S5 and S12 plays an important role in translational accuracy. The polypeptide is Small ribosomal subunit protein uS4 (Mannheimia succiniciproducens (strain KCTC 0769BP / MBEL55E)).